A 318-amino-acid chain; its full sequence is Ribosomal RNA small subunit methyltransferase H (318 aa).

Residues 42-44 (GGH), Asp62, Phe86, Asp108, and Gln115 each bind S-adenosyl-L-methionine.

Belongs to the methyltransferase superfamily. RsmH family.

It is found in the cytoplasm. It catalyses the reaction cytidine(1402) in 16S rRNA + S-adenosyl-L-methionine = N(4)-methylcytidine(1402) in 16S rRNA + S-adenosyl-L-homocysteine + H(+). Specifically methylates the N4 position of cytidine in position 1402 (C1402) of 16S rRNA. The protein is Ribosomal RNA small subunit methyltransferase H of Yersinia pestis (strain Pestoides F).